Reading from the N-terminus, the 357-residue chain is Phenylalanine--tRNA ligase alpha subunit (357 aa).

E258 is a binding site for Mg(2+).

This sequence belongs to the class-II aminoacyl-tRNA synthetase family. Phe-tRNA synthetase alpha subunit type 1 subfamily. Tetramer of two alpha and two beta subunits. The cofactor is Mg(2+).

The protein resides in the cytoplasm. It carries out the reaction tRNA(Phe) + L-phenylalanine + ATP = L-phenylalanyl-tRNA(Phe) + AMP + diphosphate + H(+). The chain is Phenylalanine--tRNA ligase alpha subunit from Caulobacter vibrioides (strain ATCC 19089 / CIP 103742 / CB 15) (Caulobacter crescentus).